The primary structure comprises 374 residues: Chaperone protein DnaJ (374 aa).

Positions 5-70 (DFYEILGVSK…EKRSAYDRMG (66 aa)) constitute a J domain. The CR-type zinc finger occupies 133–211 (GCKKEISFTA…CHGNGVKDKS (79 aa)). Residues C146, C149, C163, C166, C185, C188, C199, and C202 each contribute to the Zn(2+) site. CXXCXGXG motif repeat units follow at residues 146–153 (CDTCDGKG), 163–170 (CQTCHGQG), 185–192 (CPHCGGTG), and 199–206 (CSDCHGNG).

This sequence belongs to the DnaJ family. As to quaternary structure, homodimer. Zn(2+) is required as a cofactor.

The protein localises to the cytoplasm. Functionally, participates actively in the response to hyperosmotic and heat shock by preventing the aggregation of stress-denatured proteins and by disaggregating proteins, also in an autonomous, DnaK-independent fashion. Unfolded proteins bind initially to DnaJ; upon interaction with the DnaJ-bound protein, DnaK hydrolyzes its bound ATP, resulting in the formation of a stable complex. GrpE releases ADP from DnaK; ATP binding to DnaK triggers the release of the substrate protein, thus completing the reaction cycle. Several rounds of ATP-dependent interactions between DnaJ, DnaK and GrpE are required for fully efficient folding. Also involved, together with DnaK and GrpE, in the DNA replication of plasmids through activation of initiation proteins. The protein is Chaperone protein DnaJ of Psychrobacter arcticus (strain DSM 17307 / VKM B-2377 / 273-4).